The following is a 272-amino-acid chain: MSKSTSVSTILYLRQRLQGLKIYETSDLIQHINTFDELVGEQVSVDVKIEEKTKDMILLCSLSPLLTTLTCSMVKVAASLRFPNERWLEVITKEPRAFVYHNFLALFFKICKTNEECDHLISLAKPSMARSKVRNALTGLGEESSSRTSSGTFIRSGHDKIVKEIEKRISEFTFIPQENGETLQVINYEVGQKFEPHFDGFQRIATVLMYLSDVDKGGETVFPEAKGIKSKKGVSVRPKKGDALLFWSMRPDGSRDPSSKHGKRHCLSLNLF.

Topologically, residues 1–55 (MSKSTSVSTILYLRQRLQGLKIYETSDLIQHINTFDELVGEQVSVDVKIEEKTKD) are cytoplasmic. A helical; Signal-anchor for type II membrane protein membrane pass occupies residues 56–80 (MILLCSLSPLLTTLTCSMVKVAASL). The Lumenal portion of the chain corresponds to 81-272 (RFPNERWLEV…KRHCLSLNLF (192 aa)). The Fe2OG dioxygenase domain occupies 179–272 (NGETLQVINY…KRHCLSLNLF (94 aa)). Residues His197, Asp199, and His261 each contribute to the Fe cation site.

The protein belongs to the P4HA family. Fe(2+) is required as a cofactor. The cofactor is L-ascorbate.

It is found in the endoplasmic reticulum membrane. The catalysed reaction is L-prolyl-[collagen] + 2-oxoglutarate + O2 = trans-4-hydroxy-L-prolyl-[collagen] + succinate + CO2. In terms of biological role, catalyzes the post-translational formation of 4-hydroxyproline in -Xaa-Pro-Gly- sequences in proline-rich peptide sequences of plant glycoproteins and other proteins. Hydroxyprolines are important constituent of many plant cell wall glycoproteins such as extensins, hydroxyproline-rich glycoproteins, lectins and arabinogalactan proteins. This Arabidopsis thaliana (Mouse-ear cress) protein is Probable prolyl 4-hydroxylase 11.